The primary structure comprises 425 residues: Enolase (425 aa).

A (2R)-2-phosphoglycerate-binding site is contributed by Q162. Catalysis depends on E204, which acts as the Proton donor. Mg(2+) contacts are provided by D241, E284, and D311. K336, R365, S366, and K387 together coordinate (2R)-2-phosphoglycerate. K336 acts as the Proton acceptor in catalysis.

Belongs to the enolase family. Mg(2+) is required as a cofactor.

It localises to the cytoplasm. It is found in the secreted. The protein resides in the cell surface. The catalysed reaction is (2R)-2-phosphoglycerate = phosphoenolpyruvate + H2O. Its pathway is carbohydrate degradation; glycolysis; pyruvate from D-glyceraldehyde 3-phosphate: step 4/5. Catalyzes the reversible conversion of 2-phosphoglycerate (2-PG) into phosphoenolpyruvate (PEP). It is essential for the degradation of carbohydrates via glycolysis. This is Enolase from Brucella abortus (strain S19).